Reading from the N-terminus, the 141-residue chain is Chorion protein S16 (141 aa).

The N-terminal stretch at 1–22 is a signal peptide; that stretch reads MSANNMRLLCLLLACYISAIVA.

Belongs to the chorion protein S16 family.

Its subcellular location is the secreted. In terms of biological role, chorion membrane (egg shell) protein; plays a role in protecting the egg from the environment. The polypeptide is Chorion protein S16 (Cp16) (Drosophila subobscura (Fruit fly)).